A 495-amino-acid polypeptide reads, in one-letter code: GTPase Der (495 aa).

Residues 3-178 enclose the EngA-type G 1 domain; it reads AKIALVGRPN…EMRDLLPEED (176 aa). GTP contacts are provided by residues 9–16, 57–61, and 130–133; these read GRPNVGKS, DTGGI, and NKVD. Residues 190–227 form a disordered region; it reads TAVASADADVDADVETEGGTSASETEEGITEETVEDEP. Residues 213 to 227 show a composition bias toward acidic residues; the sequence is ETEEGITEETVEDEP. Positions 231 to 404 constitute an EngA-type G 2 domain; the sequence is LRLCMLGRPN…LAARIRRECS (174 aa). Residues 237–244, 284–288, and 349–352 each bind GTP; these read GRPNAGKS, DTAGV, and NKMD. The 85-residue stretch at 405–489 folds into the KH-like domain; it reads VRIPTGQLNR…PMRVHFRSSH (85 aa).

It belongs to the TRAFAC class TrmE-Era-EngA-EngB-Septin-like GTPase superfamily. EngA (Der) GTPase family. In terms of assembly, associates with the 50S ribosomal subunit.

Functionally, GTPase that plays an essential role in the late steps of ribosome biogenesis. This is GTPase Der from Nitratidesulfovibrio vulgaris (strain DP4) (Desulfovibrio vulgaris).